Consider the following 101-residue polypeptide: Phosphoribosyl-AMP cyclohydrolase (101 aa).

Mg(2+) is bound at residue aspartate 71. Cysteine 72 contributes to the Zn(2+) binding site. Residues aspartate 73 and aspartate 75 each contribute to the Mg(2+) site. Zn(2+) is bound by residues cysteine 88 and cysteine 95.

Belongs to the PRA-CH family. As to quaternary structure, homodimer. The cofactor is Mg(2+). Zn(2+) is required as a cofactor.

The protein resides in the cytoplasm. It carries out the reaction 1-(5-phospho-beta-D-ribosyl)-5'-AMP + H2O = 1-(5-phospho-beta-D-ribosyl)-5-[(5-phospho-beta-D-ribosylamino)methylideneamino]imidazole-4-carboxamide. It participates in amino-acid biosynthesis; L-histidine biosynthesis; L-histidine from 5-phospho-alpha-D-ribose 1-diphosphate: step 3/9. Its function is as follows. Catalyzes the hydrolysis of the adenine ring of phosphoribosyl-AMP. This Bacillus cereus (strain ATCC 10987 / NRS 248) protein is Phosphoribosyl-AMP cyclohydrolase.